The chain runs to 399 residues: Methylthioribose kinase (399 aa).

Residues Asn-40, Lys-57, and 111 to 113 (EDL) each bind ATP. Asp-229 serves as a coordination point for substrate. 246–248 (DAE) is a binding site for ATP. Arg-344 is a binding site for substrate.

Belongs to the methylthioribose kinase family. Homodimer.

The catalysed reaction is 5-(methylsulfanyl)-D-ribose + ATP = 5-(methylsulfanyl)-alpha-D-ribose 1-phosphate + ADP + H(+). The protein operates within amino-acid biosynthesis; L-methionine biosynthesis via salvage pathway; S-methyl-5-thio-alpha-D-ribose 1-phosphate from S-methyl-5'-thioadenosine (hydrolase route): step 2/2. Functionally, catalyzes the phosphorylation of methylthioribose into methylthioribose-1-phosphate. This Erwinia tasmaniensis (strain DSM 17950 / CFBP 7177 / CIP 109463 / NCPPB 4357 / Et1/99) protein is Methylthioribose kinase.